We begin with the raw amino-acid sequence, 55 residues long: Spermatid nuclear transition protein 1 (55 aa).

The span at 1–42 (MSTSRKLKSHGMRRGKNRAPHKGVKRGGSKRKYRKGSLKSRK) shows a compositional bias: basic residues. Residues 1–55 (MSTSRKLKSHGMRRGKNRAPHKGVKRGGSKRKYRKGSLKSRKRCDDANRNYRSHL) are disordered. 3 positions are modified to phosphoserine: Ser-9, Ser-37, and Ser-40.

This sequence belongs to the nuclear transition protein 1 family. As to expression, testis.

The protein localises to the nucleus. The protein resides in the chromosome. Functionally, plays a key role in the replacement of histones to protamine in the elongating spermatids of mammals. In condensing spermatids, loaded onto the nucleosomes, where it promotes the recruitment and processing of protamines, which are responsible for histone eviction. In Sus scrofa (Pig), this protein is Spermatid nuclear transition protein 1 (TNP1).